Here is a 131-residue protein sequence, read N- to C-terminus: Small ribosomal subunit protein uS11 (131 aa).

The protein belongs to the universal ribosomal protein uS11 family. In terms of assembly, part of the 30S ribosomal subunit. Interacts with proteins S7 and S18. Binds to IF-3.

In terms of biological role, located on the platform of the 30S subunit, it bridges several disparate RNA helices of the 16S rRNA. Forms part of the Shine-Dalgarno cleft in the 70S ribosome. This Clostridium novyi (strain NT) protein is Small ribosomal subunit protein uS11.